Here is a 460-residue protein sequence, read N- to C-terminus: Chromosomal replication initiator protein DnaA (460 aa).

The interval 1-83 (MENIWLEAQT…EFHVADEKPE (83 aa)) is domain I, interacts with DnaA modulators. Residues 78–121 (ADEKPEAAPEEKPEKEGKPAREKEKDKDKEKEKDREKEKDKKEL) are compositionally biased toward basic and acidic residues. Residues 78–122 (ADEKPEAAPEEKPEKEGKPAREKEKDKDKEKEKDREKEKDKKELV) form a disordered region. The tract at residues 83 to 123 (EAAPEEKPEKEGKPAREKEKDKDKEKEKDREKEKDKKELVP) is domain II. A domain III, AAA+ region region spans residues 124 to 340 (NLNPKYTFES…GMLIRLEAFA (217 aa)). 4 residues coordinate ATP: Gly-168, Gly-170, Lys-171, and Thr-172. The domain IV, binds dsDNA stretch occupies residues 341–460 (SLTGQEITLS…VEDIRKKLFT (120 aa)).

The protein belongs to the DnaA family. As to quaternary structure, oligomerizes as a right-handed, spiral filament on DNA at oriC.

It localises to the cytoplasm. Plays an essential role in the initiation and regulation of chromosomal replication. ATP-DnaA binds to the origin of replication (oriC) to initiate formation of the DNA replication initiation complex once per cell cycle. Binds the DnaA box (a 9 base pair repeat at the origin) and separates the double-stranded (ds)DNA. Forms a right-handed helical filament on oriC DNA; dsDNA binds to the exterior of the filament while single-stranded (ss)DNA is stabiized in the filament's interior. The ATP-DnaA-oriC complex binds and stabilizes one strand of the AT-rich DNA unwinding element (DUE), permitting loading of DNA polymerase. After initiation quickly degrades to an ADP-DnaA complex that is not apt for DNA replication. Binds acidic phospholipids. This Geobacter sp. (strain M21) protein is Chromosomal replication initiator protein DnaA.